The chain runs to 472 residues: GTPase HflX (472 aa).

The disordered stretch occupies residues 1-21; sequence MDTIDTPGEQGSQSFGNSLGA. In terms of domain architecture, Hflx-type G spans 230 to 396; the sequence is PTFALIGYTN…LMTEIIQEKS (167 aa). Residues 236–243, 261–265, 283–286, 349–352, and 374–376 each bind GTP; these read GYTNSGKS, FATLD, DTVG, NKVD, and SAK. Residues Ser243 and Thr263 each contribute to the Mg(2+) site.

Belongs to the TRAFAC class OBG-HflX-like GTPase superfamily. HflX GTPase family. Monomer. Associates with the 50S ribosomal subunit. It depends on Mg(2+) as a cofactor.

The protein localises to the cytoplasm. In terms of biological role, GTPase that associates with the 50S ribosomal subunit and may have a role during protein synthesis or ribosome biogenesis. Specific for GTP. The sequence is that of GTPase HflX from Chlamydia pneumoniae (Chlamydophila pneumoniae).